Here is a 1055-residue protein sequence, read N- to C-terminus: SMC5-SMC6 complex localization factor protein 1 (1055 aa).

BRCT domains follow at residues 2–80 (EDDA…AQSG) and 121–199 (PGAF…LLEK). The disordered stretch occupies residues 312 to 332 (KKRKKEKERDSRKDIEHDRST). Basic and acidic residues predominate over residues 318–332 (KERDSRKDIEHDRST). The segment at 407–1055 (PRGILNLIES…VMCRSVTEIS (649 aa)) is NSE5-like domain; mediates interaction with SLF2. ANK repeat units follow at residues 804–834 (KGET…DINV), 838–867 (AGWT…EVDL), and 872–901 (DGVT…PVLL). A Glycyl lysine isopeptide (Lys-Gly) (interchain with G-Cter in SUMO2) cross-link involves residue Lys929.

As to quaternary structure, interacts (via N-terminus) with SLF2; this interaction links RAD18 to the SMC5-SMC6 complex. Interacts (via BRCT domains) with RAD18; this interaction occurs in a SLF2-independent manner. Interacts with SMC6. Interacts (via BRCT domains) with RAD18 (via C-terminus and phosphorylated form); this interaction is required for efficient repair of UV-induced DNA damage.

The protein localises to the nucleus. The protein resides in the cytoplasm. It localises to the cytoskeleton. It is found in the microtubule organizing center. Its subcellular location is the centrosome. Functionally, plays a role in the DNA damage response (DDR) pathway by regulating postreplication repair of UV-damaged DNA and genomic stability maintenance. The SLF1-SLF2 complex acts to link RAD18 with the SMC5-SMC6 complex at replication-coupled interstrand cross-links (ICL) and DNA double-strand breaks (DSBs) sites on chromatin during DNA repair in response to stalled replication forks. Promotes the recruitment of SLF2 and the SMC5-SMC6 complex to DNA lesions. This chain is SMC5-SMC6 complex localization factor protein 1, found in Bos taurus (Bovine).